The primary structure comprises 386 residues: L-lactate dehydrogenase (386 aa).

The 380-residue stretch at 1–380 (MIISAASDYR…SGDALSRVTR (380 aa)) folds into the FMN hydroxy acid dehydrogenase domain. Tyr-24 is a binding site for substrate. 2 residues coordinate FMN: Ser-106 and Gln-127. Residue Tyr-129 participates in substrate binding. Thr-155 is a binding site for FMN. Residue Arg-164 participates in substrate binding. Lys-251 is a binding site for FMN. His-275 functions as the Proton acceptor in the catalytic mechanism. Residue Arg-278 coordinates substrate. 306 to 330 (DSGIRSGLDVVRMLALGADAVLLGR) contributes to the FMN binding site.

This sequence belongs to the FMN-dependent alpha-hydroxy acid dehydrogenase family. Requires FMN as cofactor.

It is found in the cell inner membrane. The catalysed reaction is (S)-lactate + A = pyruvate + AH2. Catalyzes the conversion of L-lactate to pyruvate. Is coupled to the respiratory chain. The sequence is that of L-lactate dehydrogenase from Xanthomonas campestris pv. campestris (strain 8004).